The primary structure comprises 185 residues: Peptidyl-tRNA hydrolase (185 aa).

Tyr14 is a binding site for tRNA. His19 functions as the Proton acceptor in the catalytic mechanism. TRNA-binding residues include Tyr65, Asn67, and Asn113.

It belongs to the PTH family. As to quaternary structure, monomer.

It is found in the cytoplasm. The catalysed reaction is an N-acyl-L-alpha-aminoacyl-tRNA + H2O = an N-acyl-L-amino acid + a tRNA + H(+). Functionally, hydrolyzes ribosome-free peptidyl-tRNAs (with 1 or more amino acids incorporated), which drop off the ribosome during protein synthesis, or as a result of ribosome stalling. Catalyzes the release of premature peptidyl moieties from peptidyl-tRNA molecules trapped in stalled 50S ribosomal subunits, and thus maintains levels of free tRNAs and 50S ribosomes. The polypeptide is Peptidyl-tRNA hydrolase (Rickettsia africae (strain ESF-5)).